The following is a 180-amino-acid chain: GTP cyclohydrolase 1 (180 aa).

Zn(2+) contacts are provided by C71, H74, and C142.

Belongs to the GTP cyclohydrolase I family. Toroid-shaped homodecamer, composed of two pentamers of five dimers.

The enzyme catalyses GTP + H2O = 7,8-dihydroneopterin 3'-triphosphate + formate + H(+). It participates in cofactor biosynthesis; 7,8-dihydroneopterin triphosphate biosynthesis; 7,8-dihydroneopterin triphosphate from GTP: step 1/1. The chain is GTP cyclohydrolase 1 from Helicobacter acinonychis (strain Sheeba).